The chain runs to 253 residues: Phycocyanobilin:ferredoxin oxidoreductase (253 aa).

This sequence belongs to the HY2 family.

It carries out the reaction (2R,3Z)-phycocyanobilin + 4 oxidized [2Fe-2S]-[ferredoxin] = biliverdin IXalpha + 4 reduced [2Fe-2S]-[ferredoxin] + 4 H(+). Catalyzes the four-electron reduction of biliverdin IX-alpha (2-electron reduction at both the A and D rings); the reaction proceeds via an isolatable 2-electron intermediate, 181,182-dihydrobiliverdin. In Gloeobacter violaceus (strain ATCC 29082 / PCC 7421), this protein is Phycocyanobilin:ferredoxin oxidoreductase (pcyA).